The sequence spans 120 residues: MEYVFVYGSLRKGFWNHEPYLKNSKFIGKGKTKEKYAMYVNIIPYVVENEKISHIVGEVYEVDEKTLKRIDCLEGHPDYYRRKKVSIILDSGKEIEAWLYFYPESCGILVESGDYKDYRG.

7-10 contacts substrate; it reads YGSL. Glutamate 74 serves as the catalytic Proton acceptor.

Belongs to the gamma-glutamylcyclotransferase family.

Putative gamma-glutamylcyclotransferase. This Methanocaldococcus jannaschii (strain ATCC 43067 / DSM 2661 / JAL-1 / JCM 10045 / NBRC 100440) (Methanococcus jannaschii) protein is Putative gamma-glutamylcyclotransferase MJ1514.